Reading from the N-terminus, the 637-residue chain is DNA gyrase subunit B (637 aa).

Residues 421-535 enclose the Toprim domain; it reads SEIYIVEGDS…HGYVYIAQPP (115 aa). Residues E427, D500, and D502 each coordinate Mg(2+).

It belongs to the type II topoisomerase GyrB family. Heterotetramer, composed of two GyrA and two GyrB chains. In the heterotetramer, GyrA contains the active site tyrosine that forms a transient covalent intermediate with DNA, while GyrB binds cofactors and catalyzes ATP hydrolysis. Requires Mg(2+) as cofactor. The cofactor is Mn(2+). Ca(2+) is required as a cofactor.

The protein localises to the cytoplasm. The enzyme catalyses ATP-dependent breakage, passage and rejoining of double-stranded DNA.. In terms of biological role, a type II topoisomerase that negatively supercoils closed circular double-stranded (ds) DNA in an ATP-dependent manner to modulate DNA topology and maintain chromosomes in an underwound state. Negative supercoiling favors strand separation, and DNA replication, transcription, recombination and repair, all of which involve strand separation. Also able to catalyze the interconversion of other topological isomers of dsDNA rings, including catenanes and knotted rings. Type II topoisomerases break and join 2 DNA strands simultaneously in an ATP-dependent manner. The polypeptide is DNA gyrase subunit B (Halalkalibacterium halodurans (strain ATCC BAA-125 / DSM 18197 / FERM 7344 / JCM 9153 / C-125) (Bacillus halodurans)).